A 34-amino-acid polypeptide reads, in one-letter code: U10-ctenitoxin-Pr1a (34 aa).

4 cysteine pairs are disulfide-bonded: Cys-2–Cys-15, Cys-9–Cys-20, Cys-14–Cys-31, and Cys-22–Cys-29.

Expressed by the venom gland.

It is found in the secreted. Non-toxic to mice and insects. The chain is U10-ctenitoxin-Pr1a from Phoneutria reidyi (Brazilian Amazonian armed spider).